The chain runs to 108 residues: PTS system galactose-specific EIIB component (108 aa).

The PTS EIIB type-3 domain maps to 3 to 108; the sequence is DKVIALACAA…VLAAAENLMN (106 aa). Cys-10 acts as the Phosphocysteine intermediate in catalysis. Residue Cys-10 is modified to Phosphocysteine; by EIIA.

The enzyme catalyses N(pros)-phospho-L-histidyl-[protein] + D-galactose(out) = D-galactose 6-phosphate(in) + L-histidyl-[protein]. Functionally, the phosphoenolpyruvate-dependent sugar phosphotransferase system (sugar PTS), a major carbohydrate active transport system, catalyzes the phosphorylation of incoming sugar substrates concomitantly with their translocation across the cell membrane. Involved in galactose transport with PtcA and Lmg_0963. The protein is PTS system galactose-specific EIIB component of Lactococcus lactis subsp. cremoris (strain MG1363).